A 201-amino-acid chain; its full sequence is MSRYRGPRFKKIRRLGALPGLTSKKPRSASDLRNQSRSGKRSQYRIRLEEKQKLRFHYGLTERQLLRYVRIAGKANGSTGQVLLQLLEMRLDNILFRLGMASTIPGARQLVNHGHILVNGRLVDIPSYRCKPRDIITTKDKQGSRALIQNHMDSSSNAELPKHLTLHSFQYKGVVNQIIDSKWVGLKVNELLIVEYYSRQT.

The tract at residues 16 to 43 is disordered; the sequence is GALPGLTSKKPRSASDLRNQSRSGKRSQ. Positions 89–169 constitute an S4 RNA-binding domain; it reads MRLDNILFRL…LPKHLTLHSF (81 aa).

It belongs to the universal ribosomal protein uS4 family. In terms of assembly, part of the 30S ribosomal subunit. Contacts protein S5. The interaction surface between S4 and S5 is involved in control of translational fidelity.

Its subcellular location is the plastid. It is found in the chloroplast. Functionally, one of the primary rRNA binding proteins, it binds directly to 16S rRNA where it nucleates assembly of the body of the 30S subunit. In terms of biological role, with S5 and S12 plays an important role in translational accuracy. The chain is Small ribosomal subunit protein uS4c (rps4) from Nymphaea alba (White water-lily).